We begin with the raw amino-acid sequence, 953 residues long: Protein ENHANCER OF LHP1 1 (953 aa).

WD repeat units lie at residues 15-55 (GGSA…TLPP), 60-99 (HHQD…FQTN), 102-143 (RFTL…RVLK), 144-183 (GHKG…VSFT), 192-232 (GFNT…KLFA), 236-275 (DHLE…DIDR), and 277-316 (KFEE…SMLS). 3 disordered regions span residues 347–370 (SESL…RKRL), 385–419 (EELN…GAFK), and 851–877 (ESKV…SATK). Acidic residues predominate over residues 349 to 359 (SLDDAMGDSDD). A compositionally biased stretch (polar residues) spans 853-877 (KVQNPPASIQTSENTEAVMKSSATK). The Nuclear localization signal motif lies at 900–907 (TKKDKSDD). Residues 919 to 953 (KNPVNNVNKEDKGQEKEVNQGEARRSSNPFLKSTV) are disordered. A compositionally biased stretch (basic and acidic residues) spans 926–943 (NKEDKGQEKEVNQGEARR). The span at 944-953 (SSNPFLKSTV) shows a compositional bias: polar residues.

Interacts with EZA1/SWN, LHP1, SLD5 and CLF in the nucleus. Expressed in root meristematic zones, initiating lateral roots, young leaves and the shoot apex.

It localises to the nucleus. Its function is as follows. Participates in maintaining the H3K27me3 mark at target genes by interacting with LHP1-PRC2 complexes during replication, thus contributing to H3K27me3 inheritance. This chain is Protein ENHANCER OF LHP1 1, found in Arabidopsis thaliana (Mouse-ear cress).